A 247-amino-acid polypeptide reads, in one-letter code: Sugar fermentation stimulation protein homolog (247 aa).

Belongs to the SfsA family.

This is Sugar fermentation stimulation protein homolog from Methylorubrum populi (strain ATCC BAA-705 / NCIMB 13946 / BJ001) (Methylobacterium populi).